Consider the following 42-residue polypeptide: Photosystem II reaction center protein J (42 aa).

A helical membrane pass occupies residues 10–30; sequence IPLWIIGTLAGTLVIGLLAIF.

Belongs to the PsbJ family. As to quaternary structure, PSII is composed of 1 copy each of membrane proteins PsbA, PsbB, PsbC, PsbD, PsbE, PsbF, PsbH, PsbI, PsbJ, PsbK, PsbL, PsbM, PsbT, PsbX, PsbY, PsbZ, Psb30/Ycf12, at least 3 peripheral proteins of the oxygen-evolving complex and a large number of cofactors. It forms dimeric complexes.

Its subcellular location is the plastid. The protein localises to the chloroplast thylakoid membrane. Its function is as follows. One of the components of the core complex of photosystem II (PSII). PSII is a light-driven water:plastoquinone oxidoreductase that uses light energy to abstract electrons from H(2)O, generating O(2) and a proton gradient subsequently used for ATP formation. It consists of a core antenna complex that captures photons, and an electron transfer chain that converts photonic excitation into a charge separation. This chain is Photosystem II reaction center protein J, found in Chaetosphaeridium globosum (Charophycean green alga).